Consider the following 470-residue polypeptide: MNRQIANILENYLGRYPSLNEYHTLKSQYRNIQKVNIFNKDIFISLLRKNKKKFFSDLVCTQSDIKHSVLSYFSKQENTYSIGKLYTIIELQTILVTTYTDVLGVLTTKGPDIFSSTIYYNISSIKKLATDIVHAMMITTVSDKIMGRHNVSSLVGNVNTLMEEYLRRHNKNCICYGSYSLHLLNPDVRYGDIDILQTNSRTFLIDLAFLIKFITGYNVVLLKVPYLKNYMVLKDHNDNHIIDSFNIRQDTMETIPKILIDNIYIVDPVLQLMSMLKMFSQIDRLEDIVKNPDKVIIRLATLLEYVRINYGIILNGDHGNMPMLSTFNHDQRIITVQTNMYNFPFKKCFIYLDENTLSRDILHLNADDAVDFENVSNSAYLIHNDTMYTYFSNTILLRSENEIHEISTRAISAHILLYQILTKGDIIQPLSDIINSLISIEKCTIYKVIQRDKKTGKHGIIDIEKDIITH.

Catalysis depends on residues Asp-192 and Asp-194.

The protein belongs to the poxviridae poly(A) polymerase catalytic subunit family. As to quaternary structure, heterodimer of a large (catalytic) subunit and a small (regulatory) subunit.

The catalysed reaction is RNA(n) + ATP = RNA(n)-3'-adenine ribonucleotide + diphosphate. Polymerase that creates the 3'-poly(A) tail of mRNA's. This is Poly(A) polymerase catalytic subunit (PAPL) from Sus scrofa (Pig).